A 2639-amino-acid chain; its full sequence is BAH and coiled-coil domain-containing protein 1 (2639 aa).

Disordered stretches follow at residues 23–49 (SAAA…GKYF), 84–107 (SAAS…GSHP), 188–249 (APAH…GKER), 669–702 (FLSS…RQPP), 716–746 (VSRS…PRST), 939–1047 (QRAA…QSTA), 1104–1331 (SDVH…HSSG), 1457–1513 (QREL…KKVK), 1582–1666 (KVKS…LGTE), 1722–1776 (EVKI…RDAL), 1868–1893 (FDDN…PLSA), and 2057–2119 (KKVS…DHFL). Low complexity-rich tracts occupy residues 24–41 (AAAA…QPPA) and 84–98 (SAAS…SSPP). 2 stretches are compositionally biased toward basic and acidic residues: residues 211–247 (GPKD…DGGK) and 679–698 (ERPD…DGEV). N6-acetyllysine is present on lysine 222. Over residues 946–964 (RKPEDQHLDLEEPAQEKAP) the composition is skewed to basic and acidic residues. Positions 972–988 (ALTPTAPGAPSPAAGPT) are enriched in low complexity. The span at 989–1013 (KLPPCCHPPDPKPPASSPTPPPRPS) shows a compositional bias: pro residues. Polar residues predominate over residues 1106–1122 (VHSSNLEDPETMQTTAP). Residues 1182-1198 (LEGLQELQCAALLEAGG) are compositionally biased toward low complexity. Positions 1212–1221 (AREERSREEG) are enriched in basic and acidic residues. Over residues 1244-1275 (LEDEGEQPAPEEDELEEDELGQQSMEDSEEDC) the composition is skewed to acidic residues. Residues 1307–1324 (DSPPDPQPPAASGPPSTV) show a composition bias toward pro residues. Residues 1439–1473 (EVGMRVRLAELQRRYKEKQRELARLQRKHDHERDE) are a coiled coil. Residues 1457–1475 (QRELARLQRKHDHERDESS) show a composition bias toward basic and acidic residues. Residues 1478–1492 (PARRGPGRPRKRKHS) are compositionally biased toward basic residues. Positions 1751–1761 (GKKKAKGKAKG) are enriched in basic residues. Over residues 1868-1888 (FDDNSSFSEEEEDEEEEEEDS) the composition is skewed to acidic residues. Serine 2274 is modified (phosphoserine). Disordered regions lie at residues 2317–2336 (SDCH…LAAG), 2348–2383 (SSSS…SDDE), and 2432–2472 (GAGS…ENRP). Over residues 2348-2371 (SSSSSGSSTSSSSGSVSTSSLCSS) the composition is skewed to low complexity. The span at 2372 to 2383 (DNEDSSYSSDDE) shows a compositional bias: acidic residues. Residues 2432 to 2442 (GAGSGPSSSSK) are compositionally biased toward low complexity. A BAH domain is found at 2513–2633 (ETLRVGDCAV…PTTGRLVTAD (121 aa)).

This chain is BAH and coiled-coil domain-containing protein 1, found in Homo sapiens (Human).